The sequence spans 260 residues: Acetyl-coenzyme A carboxylase carboxyl transferase subunit alpha (260 aa).

The region spanning 1–235 is the CoA carboxyltransferase C-terminal domain; sequence MSAYDKVMAA…SNKILHSINK (235 aa).

Belongs to the AccA family. As to quaternary structure, acetyl-CoA carboxylase is a heterohexamer composed of biotin carboxyl carrier protein (AccB), biotin carboxylase (AccC) and two subunits each of ACCase subunit alpha (AccA) and ACCase subunit beta (AccD).

It is found in the cytoplasm. The enzyme catalyses N(6)-carboxybiotinyl-L-lysyl-[protein] + acetyl-CoA = N(6)-biotinyl-L-lysyl-[protein] + malonyl-CoA. Its pathway is lipid metabolism; malonyl-CoA biosynthesis; malonyl-CoA from acetyl-CoA: step 1/1. Component of the acetyl coenzyme A carboxylase (ACC) complex. First, biotin carboxylase catalyzes the carboxylation of biotin on its carrier protein (BCCP) and then the CO(2) group is transferred by the carboxyltransferase to acetyl-CoA to form malonyl-CoA. This is Acetyl-coenzyme A carboxylase carboxyl transferase subunit alpha from Ruminiclostridium cellulolyticum (strain ATCC 35319 / DSM 5812 / JCM 6584 / H10) (Clostridium cellulolyticum).